A 227-amino-acid polypeptide reads, in one-letter code: Large ribosomal subunit protein uL1 (227 aa).

It belongs to the universal ribosomal protein uL1 family. Part of the 50S ribosomal subunit.

In terms of biological role, binds directly to 23S rRNA. The L1 stalk is quite mobile in the ribosome, and is involved in E site tRNA release. Functionally, protein L1 is also a translational repressor protein, it controls the translation of the L11 operon by binding to its mRNA. This is Large ribosomal subunit protein uL1 from Tropheryma whipplei (strain TW08/27) (Whipple's bacillus).